A 204-amino-acid polypeptide reads, in one-letter code: Probable nicotinate-nucleotide adenylyltransferase (204 aa).

Belongs to the NadD family.

The catalysed reaction is nicotinate beta-D-ribonucleotide + ATP + H(+) = deamido-NAD(+) + diphosphate. The protein operates within cofactor biosynthesis; NAD(+) biosynthesis; deamido-NAD(+) from nicotinate D-ribonucleotide: step 1/1. Catalyzes the reversible adenylation of nicotinate mononucleotide (NaMN) to nicotinic acid adenine dinucleotide (NaAD). In Mycolicibacterium gilvum (strain PYR-GCK) (Mycobacterium gilvum (strain PYR-GCK)), this protein is Probable nicotinate-nucleotide adenylyltransferase.